The following is a 265-amino-acid chain: Membrane steroid-binding protein 2 (265 aa).

A helical membrane pass occupies residues 63-85 (WAAARSASPVAVIAAVAGAAVVY). Residues 94 to 116 (PPPPPARPREEPSEEAPPPPEPV) are disordered. In terms of domain architecture, Cytochrome b5 heme-binding spans 118-217 (VGEITAEELL…SKYVKVGTIK (100 aa)). A steroid-binding region spans residues 120-217 (EITAEELLQY…SKYVKVGTIK (98 aa)).

The protein belongs to the cytochrome b5 family. MAPR subfamily.

It is found in the cell membrane. In terms of biological role, binds multiple steroid compounds. This chain is Membrane steroid-binding protein 2, found in Oryza sativa subsp. japonica (Rice).